The sequence spans 161 residues: Putative defense protein 2 (161 aa).

The signal sequence occupies residues 1–11 (LSWSALALTSA). A Reelin domain is found at 12-161 (YPTGAPTSAC…SAPVKILSHH (150 aa)). Residues cysteine 21 and cysteine 98 are joined by a disulfide bond. Asparagine 91 is a glycosylation site (N-linked (GlcNAc...) asparagine).

The protein belongs to the insect defense protein family.

It localises to the secreted. Functionally, may have antimicrobial activity. This Antheraea mylitta (Tasar silkworm) protein is Putative defense protein 2.